The following is a 242-amino-acid chain: UPF0273 protein TM_0370 (242 aa).

The 240-residue stretch at 3–242 folds into the KaiC domain; that stretch reads KRVKTGIPGM…IYPSEGGEGR (240 aa). An ATP-binding site is contributed by 30-37; sequence GGPGTGKT.

The protein belongs to the UPF0273 family.

The chain is UPF0273 protein TM_0370 from Thermotoga maritima (strain ATCC 43589 / DSM 3109 / JCM 10099 / NBRC 100826 / MSB8).